A 209-amino-acid polypeptide reads, in one-letter code: Thiamine-phosphate synthase (209 aa).

Residues 41–45 (QYRNK) and Asn73 each bind 4-amino-2-methyl-5-(diphosphooxymethyl)pyrimidine. Residues Asp74 and Asp93 each contribute to the Mg(2+) site. A 4-amino-2-methyl-5-(diphosphooxymethyl)pyrimidine-binding site is contributed by Ser112. 139–141 (SST) serves as a coordination point for 2-[(2R,5Z)-2-carboxy-4-methylthiazol-5(2H)-ylidene]ethyl phosphate. Lys142 provides a ligand contact to 4-amino-2-methyl-5-(diphosphooxymethyl)pyrimidine. Gly168 serves as a coordination point for 2-[(2R,5Z)-2-carboxy-4-methylthiazol-5(2H)-ylidene]ethyl phosphate.

Belongs to the thiamine-phosphate synthase family. Requires Mg(2+) as cofactor.

The catalysed reaction is 2-[(2R,5Z)-2-carboxy-4-methylthiazol-5(2H)-ylidene]ethyl phosphate + 4-amino-2-methyl-5-(diphosphooxymethyl)pyrimidine + 2 H(+) = thiamine phosphate + CO2 + diphosphate. It carries out the reaction 2-(2-carboxy-4-methylthiazol-5-yl)ethyl phosphate + 4-amino-2-methyl-5-(diphosphooxymethyl)pyrimidine + 2 H(+) = thiamine phosphate + CO2 + diphosphate. It catalyses the reaction 4-methyl-5-(2-phosphooxyethyl)-thiazole + 4-amino-2-methyl-5-(diphosphooxymethyl)pyrimidine + H(+) = thiamine phosphate + diphosphate. The protein operates within cofactor biosynthesis; thiamine diphosphate biosynthesis; thiamine phosphate from 4-amino-2-methyl-5-diphosphomethylpyrimidine and 4-methyl-5-(2-phosphoethyl)-thiazole: step 1/1. Functionally, condenses 4-methyl-5-(beta-hydroxyethyl)thiazole monophosphate (THZ-P) and 2-methyl-4-amino-5-hydroxymethyl pyrimidine pyrophosphate (HMP-PP) to form thiamine monophosphate (TMP). The sequence is that of Thiamine-phosphate synthase from Methylobacillus flagellatus (strain ATCC 51484 / DSM 6875 / VKM B-1610 / KT).